A 307-amino-acid polypeptide reads, in one-letter code: MKLQIKPPNNFAEFVGKQEIINQIQLSIKASRINKAQLDHILLYGPPGVGKTTLARLIASEMNTKLQIIQGGHLQRPSDFLNAVSLIKKGDVLFVDEIHAVAPSVMELMFPVMDDFRVQVLIGKDFNSKMVEMKVNPFTWIGATTQFGKIINPLEDRFGMILNIDYYSNQEIERIVSIYGEQMELELKPEEITQITQHSKQTPRIAIRIVKRLFEQKIVNKKIDLAALFKSLMIYKNGLQSIDVQYLKALNGQYEPQGIKSICSMLGIDKSTVENKIEPFLLRENMIQKTKKGRIITRTGRNYLTSC.

The interval 1 to 167 is large ATPase domain (RuvB-L); the sequence is MKLQIKPPNN…FGMILNIDYY (167 aa). ATP-binding positions include I5, G48, K51, T52, T53, 114 to 116, R157, Y167, and R204; that span reads DDF. Mg(2+) is bound at residue T52. The interval 168 to 233 is small ATPAse domain (RuvB-S); that stretch reads SNQEIERIVS…DLAALFKSLM (66 aa). The segment at 236–307 is head domain (RuvB-H); that stretch reads KNGLQSIDVQ…RTGRNYLTSC (72 aa). K289 and R294 together coordinate DNA.

Belongs to the RuvB family. In terms of assembly, homohexamer. Forms an RuvA(8)-RuvB(12)-Holliday junction (HJ) complex. HJ DNA is sandwiched between 2 RuvA tetramers; dsDNA enters through RuvA and exits via RuvB. An RuvB hexamer assembles on each DNA strand where it exits the tetramer. Each RuvB hexamer is contacted by two RuvA subunits (via domain III) on 2 adjacent RuvB subunits; this complex drives branch migration. In the full resolvosome a probable DNA-RuvA(4)-RuvB(12)-RuvC(2) complex forms which resolves the HJ.

The protein resides in the cytoplasm. The catalysed reaction is ATP + H2O = ADP + phosphate + H(+). The RuvA-RuvB-RuvC complex processes Holliday junction (HJ) DNA during genetic recombination and DNA repair, while the RuvA-RuvB complex plays an important role in the rescue of blocked DNA replication forks via replication fork reversal (RFR). RuvA specifically binds to HJ cruciform DNA, conferring on it an open structure. The RuvB hexamer acts as an ATP-dependent pump, pulling dsDNA into and through the RuvAB complex. RuvB forms 2 homohexamers on either side of HJ DNA bound by 1 or 2 RuvA tetramers; 4 subunits per hexamer contact DNA at a time. Coordinated motions by a converter formed by DNA-disengaged RuvB subunits stimulates ATP hydrolysis and nucleotide exchange. Immobilization of the converter enables RuvB to convert the ATP-contained energy into a lever motion, pulling 2 nucleotides of DNA out of the RuvA tetramer per ATP hydrolyzed, thus driving DNA branch migration. The RuvB motors rotate together with the DNA substrate, which together with the progressing nucleotide cycle form the mechanistic basis for DNA recombination by continuous HJ branch migration. Branch migration allows RuvC to scan DNA until it finds its consensus sequence, where it cleaves and resolves cruciform DNA. This Mycoplasma pneumoniae (strain ATCC 29342 / M129 / Subtype 1) (Mycoplasmoides pneumoniae) protein is Holliday junction branch migration complex subunit RuvB.